Reading from the N-terminus, the 310-residue chain is 4-diphosphocytidyl-2-C-methyl-D-erythritol kinase (310 aa).

K12 is a catalytic residue. 97–107 (PIGAGLAGGSS) provides a ligand contact to ATP. D139 is a catalytic residue.

It belongs to the GHMP kinase family. IspE subfamily.

The enzyme catalyses 4-CDP-2-C-methyl-D-erythritol + ATP = 4-CDP-2-C-methyl-D-erythritol 2-phosphate + ADP + H(+). It participates in isoprenoid biosynthesis; isopentenyl diphosphate biosynthesis via DXP pathway; isopentenyl diphosphate from 1-deoxy-D-xylulose 5-phosphate: step 3/6. Functionally, catalyzes the phosphorylation of the position 2 hydroxy group of 4-diphosphocytidyl-2C-methyl-D-erythritol. In Synechococcus sp. (strain CC9311), this protein is 4-diphosphocytidyl-2-C-methyl-D-erythritol kinase.